A 401-amino-acid polypeptide reads, in one-letter code: S-adenosylmethionine synthase (401 aa).

An ATP-binding site is contributed by His-15. Asp-17 provides a ligand contact to Mg(2+). Glu-48 contributes to the K(+) binding site. Residues Glu-61 and Gln-104 each coordinate L-methionine. Positions 104–114 are flexible loop; sequence QSPDIALGVDR. ATP is bound by residues 179 to 181, 246 to 247, Asp-255, 261 to 262, Ala-278, and Lys-282; these read DGK, RF, and RK. Asp-255 contributes to the L-methionine binding site. Lys-286 contacts L-methionine.

This sequence belongs to the AdoMet synthase family. In terms of assembly, homotetramer; dimer of dimers. Requires Mg(2+) as cofactor. The cofactor is K(+).

It localises to the cytoplasm. It carries out the reaction L-methionine + ATP + H2O = S-adenosyl-L-methionine + phosphate + diphosphate. It participates in amino-acid biosynthesis; S-adenosyl-L-methionine biosynthesis; S-adenosyl-L-methionine from L-methionine: step 1/1. Catalyzes the formation of S-adenosylmethionine (AdoMet) from methionine and ATP. The overall synthetic reaction is composed of two sequential steps, AdoMet formation and the subsequent tripolyphosphate hydrolysis which occurs prior to release of AdoMet from the enzyme. This is S-adenosylmethionine synthase from Petrotoga mobilis (strain DSM 10674 / SJ95).